Here is a 72-residue protein sequence, read N- to C-terminus: Probable neurotoxin pcD-993 (72 aa).

Residues Met-1–Ser-19 form the signal peptide. The LCN-type CS-alpha/beta domain maps to Arg-21–Arg-72. 3 disulfides stabilise this stretch: Cys-35–Cys-56, Cys-42–Cys-66, and Cys-46–Cys-68. Position 72 (Arg-72) is a propeptide, removed by a carboxypeptidase.

Belongs to the long (3 C-C) scorpion toxin superfamily. As to expression, expressed by the venom gland.

The protein localises to the secreted. The chain is Probable neurotoxin pcD-993 from Androctonus australis (Sahara scorpion).